Reading from the N-terminus, the 919-residue chain is Aminodeoxychorismate synthase, chloroplastic (919 aa).

The N-terminal 45 residues, 1–45 (MNMNFSFCSTSSELSYPSENVLRFSVASRLFSPKWKKSFISLPCR), are a transit peptide targeting the chloroplast. The Glutamine amidotransferase type-1 domain occupies 86–342 (RTLLIDNYDS…KDITVNYWSR (257 aa)). Residue Cys172 is the Nucleophile of the active site. Catalysis depends on residues His316 and Glu318. The PABB component stretch occupies residues 436 to 910 (IFMELFGKNR…KTRAPANAVM (475 aa)).

It in the C-terminal section; belongs to the anthranilate synthase component I family.

It is found in the plastid. It localises to the chloroplast. It catalyses the reaction chorismate + L-glutamine = 4-amino-4-deoxychorismate + L-glutamate. It participates in cofactor biosynthesis; tetrahydrofolate biosynthesis; 4-aminobenzoate from chorismate: step 1/2. Activated by chorismate and inhibited by dihydrofolate and methotrexate. Bifunctional enzyme that catalyzes the biosynthesis of 4-amino-4-deoxychorismate (ADC) from chorismate and glutamine. In the first step, a glutamine amidotransferase generates ammonia that is channelled between the binding sites of glutamine and chorismate and used along with chorismate in the second step, catalyzed by aminodeoxychorismate synthase, to produce ADC. Required for the synthesis of 4-aminobenzoate (PABA), an important component in tetrahydrofolate biosynthesis. Does not possess ADC lyase activity. The sequence is that of Aminodeoxychorismate synthase, chloroplastic (ADCS) from Arabidopsis thaliana (Mouse-ear cress).